We begin with the raw amino-acid sequence, 867 residues long: G-protein coupled receptor family C group 6 member A (867 aa).

A signal peptide spans 1-19; the sequence is MDLMSFILLWAGLMKVAEA. At 20-566 the chain is on the extracellular side; sequence SIAQFSQLGA…EYFDWNSGFA (547 aa). N-linked (GlcNAc...) asparagine glycosylation is found at N51, N55, N97, N296, N308, N336, N356, N370, N527, and N547. A helical transmembrane segment spans residues 567–587; that stretch reads IVLLILAALGVLLLFFMSALF. At 588–602 the chain is on the cytoplasmic side; it reads FWQRHSPVVKAAGGP. Residues 603–623 traverse the membrane as a helical segment; that stretch reads LCHLILVSLLGSFISVVFFVG. The Extracellular segment spans residues 624–634; it reads EPSDLTCRARQ. A helical membrane pass occupies residues 635–655; the sequence is VIFGFSFTLCVSCILVKSLKI. Residues 656–675 are Cytoplasmic-facing; the sequence is LLAFEMNFELKELLCMLYKP. The helical transmembrane segment at 676-696 threads the bilayer; sequence YMIVSVGMGVQIIICTVWLTL. Topologically, residues 697-716 are extracellular; that stretch reads YKPFKDKEVQTESILLECNE. A helical transmembrane segment spans residues 717–737; that stretch reads GFYVMFWLMLGYIALLALFCF. Residues 738–754 are Cytoplasmic-facing; it reads TFAYIGRKLPQKYNEAK. A helical transmembrane segment spans residues 755 to 775; it reads FITFSMVICLMAWIIFIPIHV. Residues 776-781 lie on the Extracellular side of the membrane; sequence TTSGKY. A helical transmembrane segment spans residues 782-802; sequence VPAVEMVVILISNYGILSCHF. Over 803–867 the chain is Cytoplasmic; the sequence is LPKSYIILFK…LSFVPEEKHE (65 aa).

The protein belongs to the G-protein coupled receptor 3 family. As to quaternary structure, homodimer; disulfide-linked.

Its subcellular location is the cell membrane. In terms of biological role, olfactory receptor that is activated by amino acids that act as potent odorants in fish. Displays preference for acidic amino acids such as Glu over basic amino acids. The protein is G-protein coupled receptor family C group 6 member A (gprc6a) of Danio rerio (Zebrafish).